We begin with the raw amino-acid sequence, 148 residues long: Urease accessory protein UreE (148 aa).

Belongs to the UreE family.

The protein resides in the cytoplasm. Involved in urease metallocenter assembly. Binds nickel. Probably functions as a nickel donor during metallocenter assembly. In Geobacillus kaustophilus (strain HTA426), this protein is Urease accessory protein UreE.